Here is a 279-residue protein sequence, read N- to C-terminus: HTH-type transcriptional regulator HdfR (279 aa).

Residues M1–T58 enclose the HTH lysR-type domain. A DNA-binding region (H-T-H motif) is located at residues F18–R37.

This sequence belongs to the LysR transcriptional regulatory family.

In terms of biological role, negatively regulates the transcription of the flagellar master operon flhDC by binding to the upstream region of the operon. This chain is HTH-type transcriptional regulator HdfR, found in Escherichia coli (strain SE11).